Here is a 236-residue protein sequence, read N- to C-terminus: tRNA (guanine-N(7)-)-methyltransferase (236 aa).

The S-adenosyl-L-methionine site is built by D35, E60, N87, and D113. D113 is a catalytic residue. Substrate contacts are provided by K117 and D149.

It belongs to the class I-like SAM-binding methyltransferase superfamily. TrmB family.

It carries out the reaction guanosine(46) in tRNA + S-adenosyl-L-methionine = N(7)-methylguanosine(46) in tRNA + S-adenosyl-L-homocysteine. It participates in tRNA modification; N(7)-methylguanine-tRNA biosynthesis. Its function is as follows. Catalyzes the formation of N(7)-methylguanine at position 46 (m7G46) in tRNA. In Prochlorococcus marinus (strain MIT 9303), this protein is tRNA (guanine-N(7)-)-methyltransferase.